The chain runs to 790 residues: AMP deaminase (790 aa).

Over residues 1 to 14 the composition is skewed to polar residues; the sequence is MSTPLRGSSPQVSF. A disordered region spans residues 1–26; sequence MSTPLRGSSPQVSFYESELDQEGGSD. The Zn(2+) site is built by His221 and His223. Substrate is bound by residues His223 and 292 to 297; that span reads KFNLKY. Position 488 (His488) interacts with Zn(2+). Glu491 provides a ligand contact to substrate. His510 serves as the catalytic Proton acceptor. Asp565 contacts Zn(2+). Residue 566 to 569 coordinates substrate; that stretch reads DPLQ. Disordered regions lie at residues 698–726 and 739–790; these read NKLR…SSPG and PPPL…KSDK. Composition is skewed to low complexity over residues 706–726 and 750–781; these read GSTP…SSPG and NNNN…TTTN.

This sequence belongs to the metallo-dependent hydrolases superfamily. Adenosine and AMP deaminases family. In terms of assembly, homodimer. Requires Zn(2+) as cofactor.

The protein resides in the cytoplasm. It catalyses the reaction AMP + H2O + H(+) = IMP + NH4(+). It participates in purine metabolism; IMP biosynthesis via salvage pathway; IMP from AMP: step 1/1. Activated by ATP, inhibited by GTP, EDTA and inorganic phosphate. In terms of biological role, catalyzes the conversion of adenosine monophosphate (AMP) to inosine monophosphate (IMP) and ammonia (NH4(+)). Participates in the regulation of the adenylated nucleotide pool and the interconversion to guanylated nucleotides during early morphodifferentiation. The polypeptide is AMP deaminase (amdA) (Dictyostelium discoideum (Social amoeba)).